The primary structure comprises 484 residues: Ribosome biogenesis protein YTM1 (484 aa).

Residues 13-95 are ubiquitin-like (UBL) domain; sequence VKVTFTTTEA…ESNLTLQYVR (83 aa). WD repeat units follow at residues 122–161, 168–206, 216–255, 288–328, 330–373, 379–419, and 448–484; these read SPSG…IATS, GHTA…HFSG, GHTG…APEA, IHSA…VVTT, STSH…ATTS, GHAN…PATQ, and GEGC…VVAE.

It belongs to the WD repeat WDR12/YTM1 family. As to quaternary structure, component of the NOP7 complex, composed of ERB1, NOP7 and YTM1. The complex is held together by ERB1, which interacts with NOP7 via its N-terminal domain and with YTM1 via a high-affinity interaction between the seven-bladed beta-propeller domains of the 2 proteins. The NOP7 complex associates with the 66S pre-ribosome. Interacts (via UBL domain) with MDN1 (via VWFA/MIDAS domain).

The protein resides in the nucleus. It localises to the nucleolus. Its subcellular location is the nucleoplasm. Functionally, component of the NOP7 complex, which is required for maturation of the 25S and 5.8S ribosomal RNAs and formation of the 60S ribosome. The chain is Ribosome biogenesis protein YTM1 from Chaetomium globosum (strain ATCC 6205 / CBS 148.51 / DSM 1962 / NBRC 6347 / NRRL 1970) (Soil fungus).